We begin with the raw amino-acid sequence, 206 residues long: Glycerol-3-phosphate acyltransferase 1 (206 aa).

The next 5 membrane-spanning stretches (helical) occupy residues 14–34, 67–87, 91–111, 124–144, and 148–168; these read IALA…GLIL, ATLL…SYFL, AAII…WIGF, LLGV…AVAF, and YSSL…WILG.

The protein belongs to the PlsY family. Probably interacts with PlsX.

It localises to the cell inner membrane. It carries out the reaction an acyl phosphate + sn-glycerol 3-phosphate = a 1-acyl-sn-glycero-3-phosphate + phosphate. It functions in the pathway lipid metabolism; phospholipid metabolism. In terms of biological role, catalyzes the transfer of an acyl group from acyl-phosphate (acyl-PO(4)) to glycerol-3-phosphate (G3P) to form lysophosphatidic acid (LPA). This enzyme utilizes acyl-phosphate as fatty acyl donor, but not acyl-CoA or acyl-ACP. This chain is Glycerol-3-phosphate acyltransferase 1, found in Rhizobium johnstonii (strain DSM 114642 / LMG 32736 / 3841) (Rhizobium leguminosarum bv. viciae).